Reading from the N-terminus, the 158-residue chain is Large ribosomal subunit protein uL11 (158 aa).

The protein belongs to the universal ribosomal protein uL11 family. In terms of assembly, part of the ribosomal stalk of the 50S ribosomal subunit. Interacts with L10 and the large rRNA to form the base of the stalk. L10 forms an elongated spine to which L12 dimers bind in a sequential fashion forming a multimeric L10(L12)X complex.

In terms of biological role, forms part of the ribosomal stalk which helps the ribosome interact with GTP-bound translation factors. The sequence is that of Large ribosomal subunit protein uL11 from Methanoregula boonei (strain DSM 21154 / JCM 14090 / 6A8).